The chain runs to 545 residues: MSYSIGIDYGTASGRVFLINTTNGQVVSKFVKPYTHGVIESELNGLKIPHTYALQNSNDYLEIMEEGISYIVRESKIDPDNIVGIGIDFTSSTIIFTDENLNPVHNLKQFKNNPHAYVKLWKHHGAYKEAEKLYQTAIENNNKWLGHYGYNVSSEWMIPKIMEVMNRAPEIMEKTAYIMEAGDWIVNKLTNKNIRSNCGLGFKAFWEEETGFHYDLFDKIDPKLSKVIQDKVSAPVVNIGEAVGKLDDKMAQKLGLSKETMVSPFIIDAHASLLGIGSEKDKEMTMVMGTSTCHLMLNEKQHQVPGISGSVKGAIIPELFAYEAGQSAVGDLFEYVAKQAPKSYVDEAANRNMTVFELMNEKIKHQMPGESGLIALDWHNGNRSVLSDSNLTGCIFGLTLQTKHEDIYRAYLEATAFGTKMIMQQYQDWHMEVEKVFACGGIPKKNAVMMDIYANVLNKKLIVMDSEYAPAIGAAILGAVSGGAHNSINDAVDAMKEPILYEINPEAEKVQRYETLFKAYKALHDIHGYKKANIMKDIQSLRVEG.

This sequence belongs to the ribulokinase family.

It catalyses the reaction D-ribulose + ATP = D-ribulose 5-phosphate + ADP + H(+). It carries out the reaction L-ribulose + ATP = L-ribulose 5-phosphate + ADP + H(+). It participates in carbohydrate degradation; L-arabinose degradation via L-ribulose; D-xylulose 5-phosphate from L-arabinose (bacterial route): step 2/3. This chain is Ribulokinase, found in Staphylococcus aureus (strain MSSA476).